The sequence spans 230 residues: Demethylluteothin O-methyltransferase (230 aa).

Belongs to the methyltransferase superfamily.

It catalyses the reaction demethylluteothin + S-adenosyl-L-methionine = luteothin + S-adenosyl-L-homocysteine. The protein operates within antibiotic biosynthesis. It functions in the pathway polyketide biosynthesis. Methyltransferase involved in the biosynthesis of the antibiotic aureothin, a nitroaryl polyketide metabolite with antifungal, cytotoxic and insecticidal activities. Catalyzes the methylation of demethylluteothin to luteothin (also called deoxyaureothin). Is specific for its gamma-pyrone substrate, and does not act on the alpha-pyrone isomer. This is Demethylluteothin O-methyltransferase from Streptomyces thioluteus.